The following is a 132-amino-acid chain: MPKQVIIPPGTSTPIAPFVPGTLADGVVYVSGTLPFDSANNVVYPGDPKAQTRHVLETIRRVIETAGGTMEDVTFNSIFITDWKNYAAINEIYAEFFPGDKPARFCIQCGLVKPEALVEIATVAHIGQPGGA.

It belongs to the RutC family.

It carries out the reaction (Z)-3-aminoacrylate + H2O + H(+) = 3-oxopropanoate + NH4(+). Its function is as follows. Involved in pyrimidine catabolism. Catalyzes the deamination of 3-aminoacrylate to malonic semialdehyde, a reaction that can also occur spontaneously. RutC may facilitate the reaction and modulate the metabolic fitness, rather than catalyzing essential functions. This chain is 3-aminoacrylate deaminase RutC, found in Cronobacter sakazakii (strain ATCC BAA-894) (Enterobacter sakazakii).